An 898-amino-acid polypeptide reads, in one-letter code: Histone-lysine N-methyltransferase mes-4 (898 aa).

A disordered region spans residues 1 to 68; the sequence is MLPSSGDSSK…APILTNAPKD (68 aa). Positions 36–51 are enriched in polar residues; it reads QRNATPQGAGSETSSN. 2 consecutive PHD-type zinc fingers follow at residues 126 to 214 and 303 to 355; these read DSKC…CNLD and IKAC…CVCG. The region spanning 537-665 is the SET domain; it reads EKIKLAATLC…DGDEITFSYN (129 aa). A Post-SET domain is found at 671–687; sequence NLPDCECGAENCMGTMG. Residues 689-847 form a disordered region; the sequence is AKREKPEVAD…SLQTIQETGK (159 aa). A compositionally biased stretch (basic and acidic residues) spans 692–704; it reads EKPEVADSSEKAA. The span at 705 to 719 shows a compositional bias: basic residues; it reads KKNKSSKKKSVKNQN. 2 stretches are compositionally biased toward low complexity: residues 737 to 751 and 761 to 773; these read ISPS…SSTS and SQNK…NSNQ. The segment covering 774–788 has biased composition (polar residues); it reads PVADTGSTLSTSTEL. Positions 802-811 are enriched in low complexity; it reads SSRSRAASSS.

The protein belongs to the class V-like SAM-binding methyltransferase superfamily. Histone-lysine methyltransferase family. SET2 subfamily. In terms of tissue distribution, in adults, it is predominantly expressed in the germline, and weakly expressed in intestinal cells.

It localises to the nucleus. The protein resides in the chromosome. The catalysed reaction is L-lysyl(36)-[histone H3] + 2 S-adenosyl-L-methionine = N(6),N(6)-dimethyl-L-lysyl(36)-[histone H3] + 2 S-adenosyl-L-homocysteine + 2 H(+). In terms of biological role, histone methyltransferase. Dimethylates 'Lys-36' of histone H3, a specific tag for epigenetic transcriptional activation. Plays a central role in early development and is responsible for all H3 'Lys-36' dimethylation until about the 40-cell stage. Indirectly involved in the global inactivation of the X chromosomes in germline cells, possibly by excluding the mes-2-mes-3-mes-6 repressive Polycomb complex from the autosomes. Not related to transcription elongation. Required for small-RNA-induced H3K27 trimethylation. May suppress sensitivity to RNAi. May regulate the expression of genes required for vulval development. The sequence is that of Histone-lysine N-methyltransferase mes-4 from Caenorhabditis elegans.